A 154-amino-acid polypeptide reads, in one-letter code: MTDIIATEVAPEAAEALAPVVRAPLGDRPIQTVGRRKEAIVRVRIVPGTGKITCNGRDLEAYFPSKVHQQLIKDPLVTTEKAEEFDVIANLRGGGTTGQAGALRLAIARALIASEPDDRPALKKAGFLTRDARAKESKKYGLKKARKAPQYSKR.

Positions 133–154 are disordered; that stretch reads RAKESKKYGLKKARKAPQYSKR. Residues 140-154 are compositionally biased toward basic residues; sequence YGLKKARKAPQYSKR.

Belongs to the universal ribosomal protein uS9 family.

This chain is Small ribosomal subunit protein uS9, found in Salinispora tropica (strain ATCC BAA-916 / DSM 44818 / JCM 13857 / NBRC 105044 / CNB-440).